The sequence spans 192 residues: Large ribosomal subunit protein uL10 (192 aa).

This sequence belongs to the universal ribosomal protein uL10 family. In terms of assembly, part of the ribosomal stalk of the 50S ribosomal subunit. The N-terminus interacts with L11 and the large rRNA to form the base of the stalk. The C-terminus forms an elongated spine to which L12 dimers bind in a sequential fashion forming a multimeric L10(L12)X complex.

Its function is as follows. Forms part of the ribosomal stalk, playing a central role in the interaction of the ribosome with GTP-bound translation factors. The protein is Large ribosomal subunit protein uL10 of Gloeobacter violaceus (strain ATCC 29082 / PCC 7421).